The chain runs to 291 residues: D-alanyl-D-alanine carboxypeptidase (291 aa).

The first 29 residues, 1–29, serve as a signal peptide directing secretion; the sequence is MRLRRAAATVITTGALLAAGTLGATPATA. Catalysis depends on S64, which acts as the Acyl-ester intermediate. K67 (proton acceptor) is an active-site residue. S125 is a catalytic residue. K242 contacts substrate.

The protein belongs to the peptidase S11 family.

The protein localises to the secreted. It catalyses the reaction Preferential cleavage: (Ac)2-L-Lys-D-Ala-|-D-Ala. Also transpeptidation of peptidyl-alanyl moieties that are N-acyl substituents of D-alanine.. The protein operates within cell wall biogenesis; peptidoglycan biosynthesis. Its function is as follows. Removes C-terminal D-alanyl residues from sugar-peptide cell wall precursors. This chain is D-alanyl-D-alanine carboxypeptidase, found in Streptomyces sp. (strain K15).